Consider the following 245-residue polypeptide: MLIIPAIDLKDGNCVRLRQGLMDDSTVFGEDPVAFARQWVDKGARRLHLVDLNGAFAGKPVNGDVVTAIAKAFPELPIQIGGGIRSAETIEHYLQAGVNYVIIGTKAVKEPEFVTEMCKQFAGHIIVGLDAKNGFVATDGWAEVSEVKATDLAARFASDGVTEIVYTDIARDGMMQGVNVEATVDMAKASPIPVIASGGITDMNDIRALAKVASAGISGAITGRAIYEGTLDIVEAQAYCDIVSD.

Aspartate 8 (proton acceptor) is an active-site residue. Residue aspartate 130 is the Proton donor of the active site.

Belongs to the HisA/HisF family.

Its subcellular location is the cytoplasm. The catalysed reaction is 1-(5-phospho-beta-D-ribosyl)-5-[(5-phospho-beta-D-ribosylamino)methylideneamino]imidazole-4-carboxamide = 5-[(5-phospho-1-deoxy-D-ribulos-1-ylimino)methylamino]-1-(5-phospho-beta-D-ribosyl)imidazole-4-carboxamide. It functions in the pathway amino-acid biosynthesis; L-histidine biosynthesis; L-histidine from 5-phospho-alpha-D-ribose 1-diphosphate: step 4/9. This is 1-(5-phosphoribosyl)-5-[(5-phosphoribosylamino)methylideneamino] imidazole-4-carboxamide isomerase from Teredinibacter turnerae (strain ATCC 39867 / T7901).